A 633-amino-acid polypeptide reads, in one-letter code: Kinesin-like motor protein 9 (633 aa).

A Kinesin motor domain is found at 1-392 (MIQIFLRVKK…MRYSANAREI (392 aa)). 94–101 (GVSGAGKT) is a binding site for ATP. Disordered regions lie at residues 393 to 423 (LPPP…TKAL), 531 to 556 (LEEE…SRKL), and 575 to 633 (KLWP…INEL). Polar residues predominate over residues 398–423 (NENSGSQSPSHSLLQKSKNTSSTKAL). Positions 417-541 (TSSTKALTSH…EEESIKESSA (125 aa)) form a coiled coil. A compositionally biased stretch (polar residues) spans 578–587 (PQSTLIQAPN). A compositionally biased stretch (low complexity) spans 604-623 (VSPIKPLSPSRRPPLTSLYS). Ser605, Ser611, and Ser613 each carry phosphoserine. A compositionally biased stretch (polar residues) spans 624 to 633 (GTTDIDINEL).

This sequence belongs to the TRAFAC class myosin-kinesin ATPase superfamily. Kinesin family. Interacts with ase1. Phosphorylated by cdc2 and dephosphorylated by clp1. Dephosphorylation is required for the interaction with ase1.

It localises to the nucleus. The protein resides in the cytoplasm. Its subcellular location is the cytoskeleton. The protein localises to the microtubule organizing center. It is found in the spindle pole body. Functionally, kinesin-like motor protein involved in anaphase B spindle elongation. This is Kinesin-like motor protein 9 (klp9) from Schizosaccharomyces pombe (strain 972 / ATCC 24843) (Fission yeast).